A 429-amino-acid chain; its full sequence is Alpha-L-rhamnosidase rgxB (429 aa).

The N-terminal stretch at 1–20 (MAPIALKILLFTSLIVPSIS) is a signal peptide. 7 N-linked (GlcNAc...) asparagine glycosylation sites follow: asparagine 67, asparagine 77, asparagine 97, asparagine 103, asparagine 112, asparagine 135, and asparagine 219. A PbH1 1 repeat occupies 217–238 (SKNITLTNWEVVNGDDSISTKA). Aspartate 231 serves as the catalytic Proton donor. Asparagine 239, asparagine 247, asparagine 278, and asparagine 344 each carry an N-linked (GlcNAc...) asparagine glycan. PbH1 repeat units follow at residues 240 to 260 (STDI…AIGS) and 271 to 292 (VERL…YFKT). Cysteine 374 and cysteine 380 are joined by a disulfide. Asparagine 387, asparagine 395, and asparagine 414 each carry an N-linked (GlcNAc...) asparagine glycan.

It belongs to the glycosyl hydrolase 28 family.

It is found in the secreted. It catalyses the reaction Hydrolysis of terminal non-reducing alpha-L-rhamnose residues in alpha-L-rhamnosides.. Its function is as follows. Alpha-L-rhamnosidase which is able to degrade p-nitrophenyl-alpha-L-rhamnopyranoside (pnp_Rha). The natural substrate of this enzyme has not been identified yet. In Aspergillus niger (strain ATCC MYA-4892 / CBS 513.88 / FGSC A1513), this protein is Alpha-L-rhamnosidase rgxB (rgxB).